Consider the following 204-residue polypeptide: Large ribosomal subunit protein eL15 (204 aa).

Residues Arg-172 to Asn-182 are compositionally biased toward basic residues. The interval Arg-172 to Arg-204 is disordered. Residues Lys-193 to Arg-204 show a composition bias toward polar residues.

It belongs to the eukaryotic ribosomal protein eL15 family.

In Petunia hybrida (Petunia), this protein is Large ribosomal subunit protein eL15 (RPL15).